The chain runs to 305 residues: Oxygen-dependent coproporphyrinogen-III oxidase (305 aa).

Ser92 is a binding site for substrate. Positions 96 and 106 each coordinate a divalent metal cation. The Proton donor role is filled by His106. 108-110 (NVR) provides a ligand contact to substrate. A divalent metal cation contacts are provided by His145 and His175. The important for dimerization stretch occupies residues 239–274 (YVEFNLLFDRGTLFGLQSGGRAESILISLPPLVRWE). 257–259 (GGR) contributes to the substrate binding site.

This sequence belongs to the aerobic coproporphyrinogen-III oxidase family. Homodimer. Requires a divalent metal cation as cofactor.

Its subcellular location is the cytoplasm. The enzyme catalyses coproporphyrinogen III + O2 + 2 H(+) = protoporphyrinogen IX + 2 CO2 + 2 H2O. It functions in the pathway porphyrin-containing compound metabolism; protoporphyrin-IX biosynthesis; protoporphyrinogen-IX from coproporphyrinogen-III (O2 route): step 1/1. Functionally, involved in the heme biosynthesis. Catalyzes the aerobic oxidative decarboxylation of propionate groups of rings A and B of coproporphyrinogen-III to yield the vinyl groups in protoporphyrinogen-IX. The polypeptide is Oxygen-dependent coproporphyrinogen-III oxidase (Xylella fastidiosa (strain Temecula1 / ATCC 700964)).